Consider the following 343-residue polypeptide: Inositol 2-dehydrogenase 1 (343 aa).

This sequence belongs to the Gfo/Idh/MocA family. As to quaternary structure, homotetramer.

The catalysed reaction is myo-inositol + NAD(+) = scyllo-inosose + NADH + H(+). Functionally, involved in the oxidation of myo-inositol (MI) to 2-keto-myo-inositol (2KMI or 2-inosose). This chain is Inositol 2-dehydrogenase 1, found in Mycolicibacterium vanbaalenii (strain DSM 7251 / JCM 13017 / BCRC 16820 / KCTC 9966 / NRRL B-24157 / PYR-1) (Mycobacterium vanbaalenii).